The following is a 313-amino-acid chain: Acetaldehyde dehydrogenase 2 (313 aa).

12–15 contributes to the NAD(+) binding site; that stretch reads SGNI. Catalysis depends on cysteine 132, which acts as the Acyl-thioester intermediate. Residues 163–171 and asparagine 287 contribute to the NAD(+) site; that span reads SAGPGTRAN.

This sequence belongs to the acetaldehyde dehydrogenase family.

It catalyses the reaction acetaldehyde + NAD(+) + CoA = acetyl-CoA + NADH + H(+). This Paraburkholderia xenovorans (strain LB400) protein is Acetaldehyde dehydrogenase 2 (amnH).